Consider the following 391-residue polypeptide: Chorismate synthase (391 aa).

Arg-48 is an NADP(+) binding site. FMN contacts are provided by residues 126–128 (RAS), Gly-286, 301–305 (KPTSS), and Arg-328.

Belongs to the chorismate synthase family. FMNH2 serves as cofactor.

The enzyme catalyses 5-O-(1-carboxyvinyl)-3-phosphoshikimate = chorismate + phosphate. It participates in metabolic intermediate biosynthesis; chorismate biosynthesis; chorismate from D-erythrose 4-phosphate and phosphoenolpyruvate: step 7/7. Functionally, catalyzes the anti-1,4-elimination of the C-3 phosphate and the C-6 proR hydrogen from 5-enolpyruvylshikimate-3-phosphate (EPSP) to yield chorismate, which is the branch point compound that serves as the starting substrate for the three terminal pathways of aromatic amino acid biosynthesis. This reaction introduces a second double bond into the aromatic ring system. This chain is Chorismate synthase, found in Saccharolobus islandicus (strain M.16.27) (Sulfolobus islandicus).